The following is a 305-amino-acid chain: Tyrosine recombinase XerC (305 aa).

One can recognise a Core-binding (CB) domain in the interval 1–93 (MVLDGFAAHF…SWRQYCVWLV (93 aa)). One can recognise a Tyr recombinase domain in the interval 114 to 294 (RVPKALPQEW…DFDHIARLYD (181 aa)). Catalysis depends on residues R155, K179, H246, R249, and H272. Catalysis depends on Y281, which acts as the O-(3'-phospho-DNA)-tyrosine intermediate.

Belongs to the 'phage' integrase family. XerC subfamily. Forms a cyclic heterotetrameric complex composed of two molecules of XerC and two molecules of XerD.

The protein localises to the cytoplasm. Its function is as follows. Site-specific tyrosine recombinase, which acts by catalyzing the cutting and rejoining of the recombining DNA molecules. The XerC-XerD complex is essential to convert dimers of the bacterial chromosome into monomers to permit their segregation at cell division. It also contributes to the segregational stability of plasmids. The polypeptide is Tyrosine recombinase XerC (Neisseria meningitidis serogroup C / serotype 2a (strain ATCC 700532 / DSM 15464 / FAM18)).